Reading from the N-terminus, the 114-residue chain is Photosystem II reaction center Psb28 protein (114 aa).

Belongs to the Psb28 family. As to quaternary structure, part of the photosystem II complex.

Its subcellular location is the cellular thylakoid membrane. This is Photosystem II reaction center Psb28 protein from Rippkaea orientalis (strain PCC 8801 / RF-1) (Cyanothece sp. (strain PCC 8801)).